A 20-amino-acid chain; its full sequence is Alanine aminotransferase 1 (20 aa).

An N6-(pyridoxal phosphate)lysine modification is found at lysine 11. N-linked (Glc) (glycation) lysine; in vitro glycosylation occurs at lysine 11.

Belongs to the class-I pyridoxal-phosphate-dependent aminotransferase family. Alanine aminotransferase subfamily. In terms of assembly, homodimer. Requires pyridoxal 5'-phosphate as cofactor. In terms of processing, glycation of Lys-11 inactivates the enzyme.

It localises to the cytoplasm. The enzyme catalyses L-alanine + 2-oxoglutarate = pyruvate + L-glutamate. Its pathway is amino-acid degradation; L-alanine degradation via transaminase pathway; pyruvate from L-alanine: step 1/1. Catalyzes the reversible transamination between alanine and 2-oxoglutarate to form pyruvate and glutamate. Participates in cellular nitrogen metabolism and also in liver gluconeogenesis starting with precursors transported from skeletal muscles. The polypeptide is Alanine aminotransferase 1 (GPT) (Sus scrofa (Pig)).